A 196-amino-acid chain; its full sequence is Ribonuclease HII (196 aa).

The RNase H type-2 domain maps to 9–196 (NLIAGVDEVG…APVKRALNLV (188 aa)). Positions 15, 16, and 107 each coordinate a divalent metal cation.

It belongs to the RNase HII family. Mn(2+) is required as a cofactor. It depends on Mg(2+) as a cofactor.

The protein resides in the cytoplasm. It carries out the reaction Endonucleolytic cleavage to 5'-phosphomonoester.. Endonuclease that specifically degrades the RNA of RNA-DNA hybrids. This Proteus mirabilis (strain HI4320) protein is Ribonuclease HII.